We begin with the raw amino-acid sequence, 199 residues long: MTTLTAQQIACVYAWLAQLFSRELDDEQLTQIASAQMAEWFSLLKSEPPLAAAVNELENCIATLTVRDDARLELAADFCGLFLMTDKQAALPYASAYKQDEQEIKRLLVEAGMETSGNFNEPADHLAIYLELLSHLHFSLGEGTVPARRIDSLRQKTLTALWQWLPEFVVRCRQYDSFGFYAALSQLLLVLVESDHQNR.

The protein belongs to the TorD/DmsD family. TorD subfamily.

It localises to the cytoplasm. Functionally, involved in the biogenesis of TorA. Acts on TorA before the insertion of the molybdenum cofactor and, as a result, probably favors a conformation of the apoenzyme that is competent for acquiring the cofactor. The sequence is that of Chaperone protein TorD from Escherichia coli O139:H28 (strain E24377A / ETEC).